We begin with the raw amino-acid sequence, 84 residues long: Protein SlyX homolog (84 aa).

This sequence belongs to the SlyX family.

In Mannheimia succiniciproducens (strain KCTC 0769BP / MBEL55E), this protein is Protein SlyX homolog.